Here is a 699-residue protein sequence, read N- to C-terminus: Catalase-peroxidase (699 aa).

Residues 72–200 constitute a cross-link (tryptophyl-tyrosyl-methioninium (Trp-Tyr) (with M-226)); it reads WHSAGTYRIA…LAAVMMGLIY (129 aa). The active-site Proton acceptor is H73. A cross-link (tryptophyl-tyrosyl-methioninium (Tyr-Met) (with W-72)) is located at residues 200-226; sequence YVNPEGVDGNPDPLKTAKDMRVTFARM. Heme b is bound at residue H241.

The protein belongs to the peroxidase family. Peroxidase/catalase subfamily. Homodimer or homotetramer. Heme b serves as cofactor. In terms of processing, formation of the three residue Trp-Tyr-Met cross-link is important for the catalase, but not the peroxidase activity of the enzyme.

The enzyme catalyses H2O2 + AH2 = A + 2 H2O. It catalyses the reaction 2 H2O2 = O2 + 2 H2O. Bifunctional enzyme with both catalase and broad-spectrum peroxidase activity. The sequence is that of Catalase-peroxidase from Aeromonas salmonicida (strain A449).